We begin with the raw amino-acid sequence, 324 residues long: Delta-aminolevulinic acid dehydratase (324 aa).

Residues C118, C120, and C128 each coordinate Zn(2+). K195 functions as the Schiff-base intermediate with substrate in the catalytic mechanism. The 5-aminolevulinate site is built by R205 and R217. E233 lines the Mg(2+) pocket. Catalysis depends on K248, which acts as the Schiff-base intermediate with substrate. Positions 274 and 313 each coordinate 5-aminolevulinate.

This sequence belongs to the ALAD family. In terms of assembly, homooctamer. The cofactor is Zn(2+).

It catalyses the reaction 2 5-aminolevulinate = porphobilinogen + 2 H2O + H(+). It participates in porphyrin-containing compound metabolism; protoporphyrin-IX biosynthesis; coproporphyrinogen-III from 5-aminolevulinate: step 1/4. Functionally, catalyzes an early step in the biosynthesis of tetrapyrroles. Binds two molecules of 5-aminolevulinate per subunit, each at a distinct site, and catalyzes their condensation to form porphobilinogen. The polypeptide is Delta-aminolevulinic acid dehydratase (hemB) (Staphylococcus epidermidis (strain ATCC 12228 / FDA PCI 1200)).